The chain runs to 123 residues: Small ribosomal subunit protein uS12c (123 aa).

This sequence belongs to the universal ribosomal protein uS12 family. As to quaternary structure, part of the 30S ribosomal subunit.

Its subcellular location is the plastid. The protein localises to the chloroplast. In terms of biological role, with S4 and S5 plays an important role in translational accuracy. Located at the interface of the 30S and 50S subunits. This is Small ribosomal subunit protein uS12c (rps12) from Pinus thunbergii (Japanese black pine).